The sequence spans 371 residues: Riboflavin biosynthesis protein RibD (371 aa).

The segment at 1 to 150 is deaminase; that stretch reads MEVSSEQQLF…QPYLHQRETG (150 aa). Residues 6-128 form the CMP/dCMP-type deaminase domain; it reads EQQLFFMREA…RLKEAGISVY (123 aa). H55 serves as a coordination point for Zn(2+). E57 serves as the catalytic Proton donor. Zn(2+) is bound by residues C80 and C89. Residues 151–371 are reductase; sequence LPWVVMKTAA…CFECVGREDG (221 aa). A159 contacts NADP(+). S173 lines the substrate pocket. Residue W175 coordinates NADP(+). R189 serves as a coordination point for substrate. Residues T201 and D205 each contribute to the NADP(+) site. Residues L209 and R212 each contribute to the substrate site. S230 is a binding site for NADP(+). Substrate is bound at residue E299. 301–307 provides a ligand contact to NADP(+); the sequence is GARLHSA.

In the N-terminal section; belongs to the cytidine and deoxycytidylate deaminase family. This sequence in the C-terminal section; belongs to the HTP reductase family. Zn(2+) is required as a cofactor.

It catalyses the reaction 2,5-diamino-6-hydroxy-4-(5-phosphoribosylamino)-pyrimidine + H2O + H(+) = 5-amino-6-(5-phospho-D-ribosylamino)uracil + NH4(+). The catalysed reaction is 5-amino-6-(5-phospho-D-ribitylamino)uracil + NADP(+) = 5-amino-6-(5-phospho-D-ribosylamino)uracil + NADPH + H(+). The protein operates within cofactor biosynthesis; riboflavin biosynthesis; 5-amino-6-(D-ribitylamino)uracil from GTP: step 2/4. Its pathway is cofactor biosynthesis; riboflavin biosynthesis; 5-amino-6-(D-ribitylamino)uracil from GTP: step 3/4. In terms of biological role, converts 2,5-diamino-6-(ribosylamino)-4(3h)-pyrimidinone 5'-phosphate into 5-amino-6-(ribosylamino)-2,4(1h,3h)-pyrimidinedione 5'-phosphate. The chain is Riboflavin biosynthesis protein RibD (ribD) from Chlamydia muridarum (strain MoPn / Nigg).